The following is a 318-amino-acid chain: Putative 2-hydroxyacid dehydrogenase SH0752 (318 aa).

Residues 155–156, 234–236, and D260 each bind NAD(+); these read EI and AGR. R236 is an active-site residue. E265 is a catalytic residue. H283 functions as the Proton donor in the catalytic mechanism. 283 to 286 lines the NAD(+) pocket; it reads HIGN.

Belongs to the D-isomer specific 2-hydroxyacid dehydrogenase family.

This is Putative 2-hydroxyacid dehydrogenase SH0752 from Staphylococcus haemolyticus (strain JCSC1435).